We begin with the raw amino-acid sequence, 205 residues long: Small ribosomal subunit protein uS4 (205 aa).

Positions methionine 1–serine 46 are disordered. The region spanning serine 94–leucine 154 is the S4 RNA-binding domain.

The protein belongs to the universal ribosomal protein uS4 family. Part of the 30S ribosomal subunit. Contacts protein S5. The interaction surface between S4 and S5 is involved in control of translational fidelity.

One of the primary rRNA binding proteins, it binds directly to 16S rRNA where it nucleates assembly of the body of the 30S subunit. Its function is as follows. With S5 and S12 plays an important role in translational accuracy. The polypeptide is Small ribosomal subunit protein uS4 (Caulobacter sp. (strain K31)).